The sequence spans 205 residues: Shieldin complex subunit 1 (205 aa).

Component of the shieldin complex, consisting of SHLD1, SHLD2, SHLD3 and MAD2L2/REV7. Within the complex, SHLD2 forms a scaffold which interacts with a SHLD3-MAD2L2 subcomplex via its N-terminus, and with SHLD1 via its C-terminus. Interacts with ASTE1.

The protein resides in the chromosome. Functionally, component of the shieldin complex, which plays an important role in repair of DNA double-stranded breaks (DSBs). During G1 and S phase of the cell cycle, the complex functions downstream of TP53BP1 to promote non-homologous end joining (NHEJ) and suppress DNA end resection. Mediates various NHEJ-dependent processes including immunoglobulin class-switch recombination, and fusion of unprotected telomeres. This chain is Shieldin complex subunit 1, found in Homo sapiens (Human).